The following is a 287-amino-acid chain: Bifunctional protein FolD (287 aa).

Residues 171–173 (GHS) and isoleucine 237 each bind NADP(+).

It belongs to the tetrahydrofolate dehydrogenase/cyclohydrolase family. Homodimer.

The catalysed reaction is (6R)-5,10-methylene-5,6,7,8-tetrahydrofolate + NADP(+) = (6R)-5,10-methenyltetrahydrofolate + NADPH. It carries out the reaction (6R)-5,10-methenyltetrahydrofolate + H2O = (6R)-10-formyltetrahydrofolate + H(+). It participates in one-carbon metabolism; tetrahydrofolate interconversion. Catalyzes the oxidation of 5,10-methylenetetrahydrofolate to 5,10-methenyltetrahydrofolate and then the hydrolysis of 5,10-methenyltetrahydrofolate to 10-formyltetrahydrofolate. This chain is Bifunctional protein FolD, found in Methanosarcina barkeri (strain Fusaro / DSM 804).